The following is a 454-amino-acid chain: Peroxisome assembly protein 10 (454 aa).

Topologically, residues 1–23 (MATQPPPARPPPPLTSSPYPYAA) are peroxisomal matrix. The helical transmembrane segment at 24–53 (APDIIRAHQKDAYFQGVLANRLSDLHRRLR) threads the bilayer. A topological domain (cytoplasmic) is located at residue G54. The chain crosses the membrane as a helical span at residues 55-76 (ARSAHAWAAETRTFAAALYLCL). Topologically, residues 77 to 132 (TTLLGNRTLGEEYCDLVQVEEAPSKLFASSSSKAADDHIYENGLGGGGDGGPLLPS) are peroxisomal matrix. A helical membrane pass occupies residues 133 to 165 (LPRRAGYILTAIVLPHLASRALPSVRSAIRKRL). Residues 166–201 (QSRLATLSRRRQQTGTKSGSGRGGRGGGGGITEYRV) are Cytoplasmic-facing. The segment at 171–194 (TLSRRRQQTGTKSGSGRGGRGGGG) is disordered. The segment covering 183-194 (SGSGRGGRGGGG) has biased composition (gly residues). Residues 202–229 (LRYLLTHLTPLTSGAHFRAATLAVFYFT) traverse the membrane as a helical segment. Over 230-276 (GAYYELSKWVWGLRYVFTTRAGRVVDDDHNRHHHSPQHGGGNGGRAG) the chain is Peroxisomal matrix. Residues 277 to 296 (YEVLGVLLVVQMAVRAWLHV) traverse the membrane as a helical segment. Residues 297 to 454 (REQLSSGSVA…VQHILPLRAA (158 aa)) lie on the Cytoplasmic side of the membrane. The interval 302 to 329 (SGSVAGGGGEEEEDGEDGFRERTAFGPG) is disordered. Residues C402, C405, C417, H419, C422, C425, C436, and C439 each contribute to the Zn(2+) site. The RING-type zinc-finger motif lies at 402 to 440 (CTLCLEELKDPAATQCGHVFCWACIGDWVREKPECPLCR).

Belongs to the pex2/pex10/pex12 family. In terms of assembly, component of the PEX2-PEX10-PEX12 retrotranslocation channel, composed of PEX2, PEX10 and PEX12.

Its subcellular location is the peroxisome membrane. The catalysed reaction is S-ubiquitinyl-[E2 ubiquitin-conjugating enzyme]-L-cysteine + [acceptor protein]-L-lysine = [E2 ubiquitin-conjugating enzyme]-L-cysteine + N(6)-ubiquitinyl-[acceptor protein]-L-lysine.. It participates in protein modification; protein ubiquitination. With respect to regulation, the E3 ubiquitin-protein ligase activity is stimulated by PEX12. Its function is as follows. E3 ubiquitin-protein ligase component of a retrotranslocation channel required for peroxisome organization by mediating export of the PEX5 receptor from peroxisomes to the cytosol, thereby promoting PEX5 recycling. The retrotranslocation channel is composed of PEX2, PEX10 and PEX12; each subunit contributing transmembrane segments that coassemble into an open channel that specifically allows the passage of PEX5 through the peroxisomal membrane. PEX10 also regulates PEX5 recycling by acting as a E3 ubiquitin-protein ligase. When PEX5 recycling is compromised, PEX10 catalyzes polyubiquitination of PEX5 during its passage through the retrotranslocation channel, leading to its degradation. The sequence is that of Peroxisome assembly protein 10 from Thermothelomyces thermophilus (strain ATCC 42464 / BCRC 31852 / DSM 1799) (Sporotrichum thermophile).